The chain runs to 298 residues: Ketohexokinase (298 aa).

Aspartate 15, glycine 41, asparagine 42, and asparagine 45 together coordinate beta-D-fructose. Residues arginine 108, 226-229 (AEEG), and 255-258 (GAGD) contribute to the ATP site. Beta-D-fructose is bound at residue aspartate 258.

Belongs to the carbohydrate kinase PfkB family. In terms of assembly, homodimer. Most abundant in liver, kidney, gut, spleen and pancreas. Low levels also found in adrenal, muscle, brain and eye.

The catalysed reaction is beta-D-fructose + ATP = beta-D-fructose 1-phosphate + ADP + H(+). Its pathway is carbohydrate metabolism; fructose metabolism. With respect to regulation, requires potassium. Inhibition by ADP. Its function is as follows. Catalyzes the phosphorylation of the ketose sugar fructose to fructose-1-phosphate. The protein is Ketohexokinase of Homo sapiens (Human).